A 256-amino-acid chain; its full sequence is Exosome complex component RRP41-like (256 aa).

It belongs to the RNase PH family. In terms of assembly, probable component of the RNA exosome complex. As to expression, highly expressed in imbibed seeds and young seedlings.

The protein localises to the cytoplasm. It localises to the nucleus. Its function is as follows. Non-catalytic component of the RNA exosome complex which has 3'-&gt;5' exoribonuclease activity and participates in a multitude of cellular RNA processing, maturation and degradation events. In vitro, is a processive phosphorolytic exonuclease and requires a single-stranded poly(A) tail on the substrate RNA for its activity. Plays an important role in seed germination and early seedling growth by mediating specific cytoplasmic mRNA decay of transcripts coding for the abscisic acid (ABA) biosynthetic enzymes NCED5 and NCED6, and the ABA signaling transcription factors ABI3 and ABI4. This chain is Exosome complex component RRP41-like, found in Arabidopsis thaliana (Mouse-ear cress).